The primary structure comprises 488 residues: Cobyric acid synthase (488 aa).

Residues 247-440 enclose the GATase cobBQ-type domain; it reads LLRVIVPVLP…VHGVFDEPTA (194 aa). Cys-328 (nucleophile) is an active-site residue. The active site involves His-432.

It belongs to the CobB/CobQ family. CobQ subfamily.

Its pathway is cofactor biosynthesis; adenosylcobalamin biosynthesis. Its function is as follows. Catalyzes amidations at positions B, D, E, and G on adenosylcobyrinic A,C-diamide. NH(2) groups are provided by glutamine, and one molecule of ATP is hydrogenolyzed for each amidation. This Cupriavidus pinatubonensis (strain JMP 134 / LMG 1197) (Cupriavidus necator (strain JMP 134)) protein is Cobyric acid synthase.